The primary structure comprises 935 residues: Bifunctional alpha-galactosidase/sucrose kinase AgaSK (935 aa).

An alpha-galactosidase region spans residues 1-720 (MAIIYNPNKK…EAYQFAFTEL (720 aa)). Residues Glu-176, Glu-277, and Phe-280 each contribute to the Mg(2+) site. Substrate is bound by residues 366-367 (DD), Arg-443, 476-480 (KWDMN), and 518-521 (CSGG). Residue Asp-526 is the Nucleophile of the active site. Asp-540 is a substrate binding site. The active-site Proton donor/acceptor is the Glu-606. The segment at 721-935 (KEAGRLYEKV…VGKDGSVYEQ (215 aa)) is sucrose kinase. Residues 748–752 (GGSGS) and Ala-824 each bind ATP.

In the N-terminal section; belongs to the glycosyl hydrolase 36 family. The protein in the C-terminal section; belongs to the uridine kinase family. As to quaternary structure, homotetramer. The cofactor is Mg(2+).

The enzyme catalyses Hydrolysis of terminal, non-reducing alpha-D-galactose residues in alpha-D-galactosides, including galactose oligosaccharides, galactomannans and galactolipids.. Its function is as follows. Bifunctional enzyme with alpha-galactosidase and sucrose kinase activities. Produces sucrose-6-phosphate directly from raffinose. Binds ATP. Phosphorylates sucrose specifically on the C6 position of glucose in the presence of ATP. Hydrolyzes melibiose, raffinose, stachyose and synthetic substrate p-nitrophenyl-alpha-D-galactopyranoside with high activity. Low activity against locust bean gum, guar gum and synthetic substrates xylose alpha-D-4-nitrophenol, glucose alpha-D-4-nitrophenol and o-nitrophenyl-alpha-D-galactopyranoside. This chain is Bifunctional alpha-galactosidase/sucrose kinase AgaSK, found in Mediterraneibacter gnavus (Ruminococcus gnavus).